A 166-amino-acid chain; its full sequence is Bacterial non-heme ferritin (166 aa).

Residues 2 to 145 (LSKELLAALN…THIDYLTRIG (144 aa)) form the Ferritin-like diiron domain. Fe cation contacts are provided by glutamate 17, glutamate 50, histidine 53, glutamate 94, and glutamine 127.

Belongs to the ferritin family. Prokaryotic subfamily.

The protein resides in the cytoplasm. The catalysed reaction is 4 Fe(2+) + O2 + 6 H2O = 4 iron(III) oxide-hydroxide + 12 H(+). Functionally, iron-storage protein. The protein is Bacterial non-heme ferritin (ftnA) of Staphylococcus epidermidis (strain ATCC 35984 / DSM 28319 / BCRC 17069 / CCUG 31568 / BM 3577 / RP62A).